A 1362-amino-acid polypeptide reads, in one-letter code: DNA-directed RNA polymerase subunit beta (1362 aa).

This sequence belongs to the RNA polymerase beta chain family. The RNAP catalytic core consists of 2 alpha, 1 beta, 1 beta' and 1 omega subunit. When a sigma factor is associated with the core the holoenzyme is formed, which can initiate transcription.

The catalysed reaction is RNA(n) + a ribonucleoside 5'-triphosphate = RNA(n+1) + diphosphate. Its function is as follows. DNA-dependent RNA polymerase catalyzes the transcription of DNA into RNA using the four ribonucleoside triphosphates as substrates. This is DNA-directed RNA polymerase subunit beta from Parvibaculum lavamentivorans (strain DS-1 / DSM 13023 / NCIMB 13966).